Consider the following 147-residue polypeptide: UPF0208 membrane protein CGSHiEE_06015 (147 aa).

Transmembrane regions (helical) follow at residues 38–58 and 67–87; these read FAQKFMPFVAVFAILWQQIYA and IAILTALFALLIPFQGLYWLG.

It belongs to the UPF0208 family.

The protein localises to the cell inner membrane. The chain is UPF0208 membrane protein CGSHiEE_06015 from Haemophilus influenzae (strain PittEE).